The chain runs to 143 residues: Large ribosomal subunit protein uL11 (143 aa).

This sequence belongs to the universal ribosomal protein uL11 family. In terms of assembly, part of the ribosomal stalk of the 50S ribosomal subunit. Interacts with L10 and the large rRNA to form the base of the stalk. L10 forms an elongated spine to which L12 dimers bind in a sequential fashion forming a multimeric L10(L12)X complex. One or more lysine residues are methylated.

In terms of biological role, forms part of the ribosomal stalk which helps the ribosome interact with GTP-bound translation factors. This is Large ribosomal subunit protein uL11 from Erythrobacter litoralis (strain HTCC2594).